Reading from the N-terminus, the 350-residue chain is UDP-glucose 4-epimerase 2 (350 aa).

NAD(+) is bound by residues 12–14, 33–37, 63–64, F85, and K89; these read GYI, DNYDN, and DL. Substrate is bound at residue 129 to 131; that stretch reads SAT. Y153 acts as the Proton acceptor in catalysis. NAD(+) is bound by residues K157 and Y181. Substrate-binding positions include 181 to 183, 202 to 204, 220 to 222, R235, and 297 to 300; these read YFN, NNL, TVF, and RPGD.

This sequence belongs to the NAD(P)-dependent epimerase/dehydratase family. Forms homodimers and heterodimers. It depends on NAD(+) as a cofactor. Widely expressed. Most highly expressed in stems and flowers.

Its subcellular location is the cytoplasm. The enzyme catalyses UDP-alpha-D-glucose = UDP-alpha-D-galactose. The protein operates within carbohydrate metabolism; galactose metabolism. Its activity is regulated as follows. Enhanced activity by NaCl. Enhanced activity by NAD(+). Strongly inhibited by UDP. Its function is as follows. Catalyzes the interconversion between UDP-glucose and UDP-galactose. Cooperates with UGE3 in pollen development and with UGE4 in cell wall carbohydrate biosynthesis and growth. The chain is UDP-glucose 4-epimerase 2 from Arabidopsis thaliana (Mouse-ear cress).